The sequence spans 552 residues: Non-structural protein NS1 (552 aa).

It belongs to the orbivirus non-structural protein NS1 family.

This Antilocapra americana (Pronghorn) protein is Non-structural protein NS1 (Segment-5).